Here is a 123-residue protein sequence, read N- to C-terminus: Small ribosomal subunit protein uS12 (123 aa).

Aspartate 89 is modified (3-methylthioaspartic acid).

It belongs to the universal ribosomal protein uS12 family. In terms of assembly, part of the 30S ribosomal subunit. Contacts proteins S8 and S17. May interact with IF1 in the 30S initiation complex.

With S4 and S5 plays an important role in translational accuracy. In terms of biological role, interacts with and stabilizes bases of the 16S rRNA that are involved in tRNA selection in the A site and with the mRNA backbone. Located at the interface of the 30S and 50S subunits, it traverses the body of the 30S subunit contacting proteins on the other side and probably holding the rRNA structure together. The combined cluster of proteins S8, S12 and S17 appears to hold together the shoulder and platform of the 30S subunit. The protein is Small ribosomal subunit protein uS12 of Caulobacter vibrioides (strain ATCC 19089 / CIP 103742 / CB 15) (Caulobacter crescentus).